We begin with the raw amino-acid sequence, 176 residues long: NAD(P)H-quinone oxidoreductase subunit 6, chloroplastic (176 aa).

A run of 5 helical transmembrane segments spans residues 10–30 (FLLVFLGLGLILGGLGVVLLA), 32–52 (PIYSAFSLGLVFVCISLFYIL), 61–81 (AQLLIYVGAINVLIIFAVMFI), 92–112 (LWTVGDGVTSVVCTSLFVSLI), and 152–172 (FFIPFEFISIILLVALIGAIA).

The protein belongs to the complex I subunit 6 family. As to quaternary structure, NDH is composed of at least 16 different subunits, 5 of which are encoded in the nucleus.

It localises to the plastid. It is found in the chloroplast thylakoid membrane. The catalysed reaction is a plastoquinone + NADH + (n+1) H(+)(in) = a plastoquinol + NAD(+) + n H(+)(out). It carries out the reaction a plastoquinone + NADPH + (n+1) H(+)(in) = a plastoquinol + NADP(+) + n H(+)(out). Its function is as follows. NDH shuttles electrons from NAD(P)H:plastoquinone, via FMN and iron-sulfur (Fe-S) centers, to quinones in the photosynthetic chain and possibly in a chloroplast respiratory chain. The immediate electron acceptor for the enzyme in this species is believed to be plastoquinone. Couples the redox reaction to proton translocation, and thus conserves the redox energy in a proton gradient. The sequence is that of NAD(P)H-quinone oxidoreductase subunit 6, chloroplastic (ndhG) from Helianthus annuus (Common sunflower).